Here is a 235-residue protein sequence, read N- to C-terminus: MGRAFEYRRASKEARWDKMSKLFPKLAKAIQVAAKEGGADPDMNPKLRSAIATAKANNMPKDNIDAAIKRASGKDSADIKNIHYEGKAAHGALIIVECMSDNPTRTVANVKAIFSKNGGEILQNGSLTFMFSHKAVFHLEKYNGDLEELELDLIDAGLEELDQDDEELRIIGDYTAFGELSNAIEKKALVLKKAGLEYLANNPVSFSEEQLLDIEKLLDKLEDDDDVQAVYTNIE.

This sequence belongs to the TACO1 family.

Its subcellular location is the cytoplasm. The sequence is that of Probable transcriptional regulatory protein Cla_1081 from Campylobacter lari (strain RM2100 / D67 / ATCC BAA-1060).